Reading from the N-terminus, the 100-residue chain is MSDKTLTRMDLSEAVFREVGLSRNESAQLVESMLNHMSDALVRGEQVKISSFGTFSVRDKSARVGRNPKTGEEVPIQPRRVLTFRPSHLMKERVAAGNRK.

This sequence belongs to the bacterial histone-like protein family. In terms of assembly, heterodimer of an alpha and a beta chain.

This protein is one of the two subunits of integration host factor, a specific DNA-binding protein that functions in genetic recombination as well as in transcriptional and translational control. The polypeptide is Integration host factor subunit alpha (Ruegeria pomeroyi (strain ATCC 700808 / DSM 15171 / DSS-3) (Silicibacter pomeroyi)).